We begin with the raw amino-acid sequence, 377 residues long: NIF3-like protein 1 (377 aa).

The residue at position 109 (K109) is an N6-acetyllysine. The interval 244-377 (LLLHTGMGRL…ETDRDPLQVV (134 aa)) is mediates interaction with COPS2. T255 bears the Phosphothreonine mark. S259 bears the Phosphoserine mark.

This sequence belongs to the GTP cyclohydrolase I type 2/NIF3 family. Homodimer. Interacts with COPS2. Interacts with THOC7.

The protein localises to the cytoplasm. Its subcellular location is the nucleus. Functionally, may function as a transcriptional corepressor through its interaction with COPS2, negatively regulating the expression of genes involved in neuronal differentiation. The protein is NIF3-like protein 1 of Homo sapiens (Human).